Consider the following 358-residue polypeptide: Testis-specific serine/threonine-protein kinase 2 (358 aa).

The Protein kinase domain occupies 12-272 (YIVGINLGKG…IDEILSHSWL (261 aa)). ATP contacts are provided by residues 18-26 (LGKGSYAKV) and K41. The active-site Proton acceptor is the D136. Composition is skewed to basic and acidic residues over residues 296–315 (DCKL…DHKL) and 329–358 (NEDR…KAST). Residues 296 to 358 (DCKLDTRPGS…SGAEVEKAST (63 aa)) are disordered.

The protein belongs to the protein kinase superfamily. CAMK Ser/Thr protein kinase family. In terms of assembly, interacts with TSSK1B. Interacts with HSP90; this interaction stabilizes TSSK2. Requires Mg(2+) as cofactor. In terms of processing, autophosphorylated. Post-translationally, ubiquitinated; HSP90 activity negatively regulates ubiquitination and degradation. As to expression, testis-specific. Expressed only in the spermatids postmeiotically at the final stages of cytodifferentiation in the seminiferous tubules (at protein level). Not detected in released sperms in the lumen of the seminiferous tubules. Also present in the epididymal sperm (at protein level).

Its subcellular location is the cytoplasm. It is found in the cytoskeleton. The protein resides in the microtubule organizing center. It localises to the centrosome. The protein localises to the centriole. Its subcellular location is the cytoplasmic vesicle. It is found in the secretory vesicle. The protein resides in the acrosome. It catalyses the reaction L-seryl-[protein] + ATP = O-phospho-L-seryl-[protein] + ADP + H(+). The enzyme catalyses L-threonyl-[protein] + ATP = O-phospho-L-threonyl-[protein] + ADP + H(+). Activated by phosphorylation on Thr-174, potentially by autophosphorylation. Testis-specific serine/threonine-protein kinase required during spermatid development. Phosphorylates 'Ser-281' of TSKS and SPAG16. Involved in the late stages of spermatogenesis, during the reconstruction of the cytoplasm. During spermatogenesis, required for the transformation of a ring-shaped structure around the base of the flagellum originating from the chromatoid body. The sequence is that of Testis-specific serine/threonine-protein kinase 2 (Tssk2) from Mus musculus (Mouse).